Here is a 161-residue protein sequence, read N- to C-terminus: Carboxysome assembly protein CcmN (161 aa).

Residues 111–140 (LLSAETPPTTATVSSSEPAGRSPQSSAIAH) are disordered. The segment covering 116 to 137 (TPPTTATVSSSEPAGRSPQSSA) has biased composition (polar residues). Positions 144-161 (VYGKEQFLRMRQSMFPDR) match the Encapsulation peptide motif.

Belongs to the CcmN family. In terms of assembly, interacts with CcmM via the N-terminus of CcmN. Interacts with CcmK2 via the 18 C-terminal residues.

It localises to the carboxysome. Functionally, required for carboxysome formation; the N-terminus interacts with CcmM which itself binds RuBisCO (ribulose bisphosphate carboxylase, rbcL-rbcS), while the C-terminal 18 residues interact with carboxysome shell protein CcmK2. Required for growth in normal air. Beta-carboxysome assembly initiates when soluble RuBisCO is condensed into a liquid matrix in a pre-carboxysome by the RbcS-like domains of probably both CcmM58 and CcmM35. CcmN interacts with the N-terminus of CcmM58, and then recruits the CcmK2 major shell protein via CcmN's encapsulation peptide. Shell formation requires CcmK proteins and CcmO. CcmL caps the otherwise elongated carboxysome. Once fully encapsulated carboxysomes are formed, they migrate within the cell probably via interactions with the cytoskeleton. This chain is Carboxysome assembly protein CcmN, found in Synechococcus elongatus (strain ATCC 33912 / PCC 7942 / FACHB-805) (Anacystis nidulans R2).